The following is a 307-amino-acid chain: GTPase Era (307 aa).

In terms of domain architecture, Era-type G spans arginine 13–proline 180. A G1 region spans residues glycine 21–serine 28. Glycine 21–serine 28 serves as a coordination point for GTP. The segment at glutamine 47–alanine 51 is G2. A G3 region spans residues aspartate 68–glycine 71. Residues aspartate 68–isoleucine 72 and asparagine 130–aspartate 133 each bind GTP. The tract at residues asparagine 130–aspartate 133 is G4. Residues isoleucine 159–alanine 161 form a G5 region. Positions leucine 211–glutamate 288 constitute a KH type-2 domain.

Belongs to the TRAFAC class TrmE-Era-EngA-EngB-Septin-like GTPase superfamily. Era GTPase family. In terms of assembly, monomer.

The protein localises to the cytoplasm. It localises to the cell inner membrane. In terms of biological role, an essential GTPase that binds both GDP and GTP, with rapid nucleotide exchange. Plays a role in 16S rRNA processing and 30S ribosomal subunit biogenesis and possibly also in cell cycle regulation and energy metabolism. The protein is GTPase Era of Bradyrhizobium sp. (strain ORS 278).